Here is a 282-residue protein sequence, read N- to C-terminus: tRNA N(3)-cytidine methyltransferase METTL6 (282 aa).

S-adenosyl-L-methionine contacts are provided by Trp45, Tyr49, Gly87, Asp110, Asp136, Leu137, and Ile157.

It belongs to the methyltransferase superfamily. METL family. As to quaternary structure, monomer. Interacts with SARS1/SerRS; interaction is mediated via tRNA(Ser) and is required for N(3)-methylcytidine methylation.

It localises to the cytoplasm. The protein localises to the nucleus. The catalysed reaction is cytidine(32) in tRNA(Ser) + S-adenosyl-L-methionine = N(3)-methylcytidine(32) in tRNA(Ser) + S-adenosyl-L-homocysteine + H(+). In terms of biological role, S-adenosyl-L-methionine-dependent methyltransferase that mediates N(3)-methylcytidine modification of residue 32 of the tRNA anticodon loop of tRNA(Ser), including tRNA(Ser)(UGA) and tRNA(Ser)(GCU). Interaction with SARS1/SerRS is required for N(3)-methylcytidine methylation. This chain is tRNA N(3)-cytidine methyltransferase METTL6 (METTL6), found in Pongo abelii (Sumatran orangutan).